The primary structure comprises 140 residues: Lymphocyte antigen 6L (140 aa).

The signal sequence occupies residues 1-20 (MAPLLLVLWASLVSMELTGG). A UPAR/Ly6 domain is found at 31-124 (LSCFECFKVL…GSWEGFWSLP (94 aa)). Intrachain disulfides connect Cys33–Cys50 and Cys105–Cys110. Residue Ser116 is the site of GPI-anchor amidated serine attachment. The propeptide at 117 to 140 (WEGFWSLPGRLLLPMGLGLFCTLL) is removed in mature form.

The protein localises to the cell membrane. The polypeptide is Lymphocyte antigen 6L (Mus musculus (Mouse)).